A 159-amino-acid polypeptide reads, in one-letter code: NADH-quinone oxidoreductase subunit B (159 aa).

The [4Fe-4S] cluster site is built by Cys36, Cys37, Cys102, and Cys132.

Belongs to the complex I 20 kDa subunit family. NDH-1 is composed of 14 different subunits. Subunits NuoB, C, D, E, F, and G constitute the peripheral sector of the complex. Requires [4Fe-4S] cluster as cofactor.

The protein localises to the cell inner membrane. The catalysed reaction is a quinone + NADH + 5 H(+)(in) = a quinol + NAD(+) + 4 H(+)(out). In terms of biological role, NDH-1 shuttles electrons from NADH, via FMN and iron-sulfur (Fe-S) centers, to quinones in the respiratory chain. Couples the redox reaction to proton translocation (for every two electrons transferred, four hydrogen ions are translocated across the cytoplasmic membrane), and thus conserves the redox energy in a proton gradient. This is NADH-quinone oxidoreductase subunit B from Delftia acidovorans (strain DSM 14801 / SPH-1).